A 421-amino-acid polypeptide reads, in one-letter code: Imidazolonepropionase (421 aa).

Residues His-81 and His-83 each coordinate Fe(3+). 2 residues coordinate Zn(2+): His-81 and His-83. Arg-90, Tyr-153, and His-186 together coordinate 4-imidazolone-5-propanoate. Tyr-153 contributes to the N-formimidoyl-L-glutamate binding site. His-251 serves as a coordination point for Fe(3+). His-251 is a binding site for Zn(2+). 4-imidazolone-5-propanoate is bound at residue Glu-254. Asp-326 provides a ligand contact to Fe(3+). Asp-326 contacts Zn(2+). N-formimidoyl-L-glutamate is bound by residues Asn-328 and Gly-330. Ser-331 is a binding site for 4-imidazolone-5-propanoate.

Belongs to the metallo-dependent hydrolases superfamily. HutI family. The cofactor is Zn(2+). Fe(3+) serves as cofactor.

The protein localises to the cytoplasm. The catalysed reaction is 4-imidazolone-5-propanoate + H2O = N-formimidoyl-L-glutamate. Its pathway is amino-acid degradation; L-histidine degradation into L-glutamate; N-formimidoyl-L-glutamate from L-histidine: step 3/3. Its function is as follows. Catalyzes the hydrolytic cleavage of the carbon-nitrogen bond in imidazolone-5-propanoate to yield N-formimidoyl-L-glutamate. It is the third step in the universal histidine degradation pathway. The sequence is that of Imidazolonepropionase from Streptococcus sanguinis (strain SK36).